Reading from the N-terminus, the 464-residue chain is Chitobiosyldiphosphodolichol beta-mannosyltransferase (464 aa).

Topologically, residues 1–2 (MA) are lumenal. A helical membrane pass occupies residues 3–23 (ASCLVLLALCLLLPLLLLGGW). Topologically, residues 24 to 99 (KRWRRGRTAR…ELQSLAVGPR (76 aa)) are cytoplasmic. The helical intramembrane region spans 100–120 (VFQYGVKVVFQAMYLLWKLMW). Residues 121–464 (REPGAYIFLQ…QTVLPLVMDT (344 aa)) are Cytoplasmic-facing. The residue at position 242 (serine 242) is a Phosphoserine. A disordered region spans residues 242–261 (SPFRARSEPEDPATERSAFT).

It belongs to the glycosyltransferase group 1 family. Glycosyltransferase 33 subfamily.

The protein localises to the endoplasmic reticulum membrane. The catalysed reaction is an N,N'-diacetylchitobiosyl-diphospho-di-trans,poly-cis-dolichol + GDP-alpha-D-mannose = a beta-D-Man-(1-&gt;4)-beta-D-GlcNAc-(1-&gt;4)-alpha-D-GlcNAc-diphospho-di-trans,poly-cis-dolichol + GDP + H(+). The protein operates within protein modification; protein glycosylation. Mannosyltransferase that operates in the biosynthetic pathway of dolichol-linked oligosaccharides, the glycan precursors employed in protein asparagine (N)-glycosylation. The assembly of dolichol-linked oligosaccharides begins on the cytosolic side of the endoplasmic reticulum membrane and finishes in its lumen. The sequential addition of sugars to dolichol pyrophosphate produces dolichol-linked oligosaccharides containing fourteen sugars, including two GlcNAcs, nine mannoses and three glucoses. Once assembled, the oligosaccharide is transferred from the lipid to nascent proteins by oligosaccharyltransferases. Catalyzes, on the cytoplasmic face of the endoplasmic reticulum, the addition of the first mannose residues to the dolichol-linked oligosaccharide chain, to produce Man1GlcNAc(2)-PP-dolichol core oligosaccharide. Man1GlcNAc(2)-PP-dolichol is a substrate for ALG2, the following enzyme in the biosynthetic pathway. The polypeptide is Chitobiosyldiphosphodolichol beta-mannosyltransferase (Pongo abelii (Sumatran orangutan)).